Reading from the N-terminus, the 451-residue chain is Zinc metalloproteinase nas-16 (451 aa).

Residues 70 to 273 (QVVTKLFSPQ…LTINTAYNCK (204 aa)) form the Peptidase M12A domain. Disulfide bonds link Cys127–Cys272, Cys148–Cys167, Cys274–Cys291, and Cys296–Cys305. N-linked (GlcNAc...) asparagine glycosylation occurs at Asn133. Zn(2+) is bound at residue His175. The active site involves Glu176. Positions 179 and 185 each coordinate Zn(2+). The EGF-like domain occupies 267 to 306 (NTAYNCKCPSELLCANGGYTNPSNCLECICPLGYGGVLCD). Residues Asn363 and Asn438 are each glycosylated (N-linked (GlcNAc...) asparagine).

The cofactor is Zn(2+).

It localises to the secreted. In terms of biological role, metalloprotease. The protein is Zinc metalloproteinase nas-16 (nas-16) of Caenorhabditis elegans.